The sequence spans 170 residues: Mitochondrial fission 1 protein A (170 aa).

The stretch at 90–123 (REKLYLLAVGYYRSGNYSRSRQLVDRCIEMQADW) is one TPR repeat. Residues 142–162 (VIGIGITATAFGAVGLIAGGI) form a helical membrane-spanning segment.

The protein belongs to the FIS1 family. Interacts with ARC5.

The protein resides in the mitochondrion outer membrane. Its subcellular location is the peroxisome membrane. Component of the peroxisomal and mitochondrial division machineries. Plays a role in promoting the fission of mitochondria and peroxisomes. This Arabidopsis thaliana (Mouse-ear cress) protein is Mitochondrial fission 1 protein A (FIS1A).